We begin with the raw amino-acid sequence, 214 residues long: Outer-membrane lipoprotein carrier protein (214 aa).

The N-terminal stretch at Met-1–Ala-23 is a signal peptide.

The protein belongs to the LolA family. Monomer.

The protein resides in the periplasm. Participates in the translocation of lipoproteins from the inner membrane to the outer membrane. Only forms a complex with a lipoprotein if the residue after the N-terminal Cys is not an aspartate (The Asp acts as a targeting signal to indicate that the lipoprotein should stay in the inner membrane). The chain is Outer-membrane lipoprotein carrier protein from Shewanella frigidimarina (strain NCIMB 400).